The primary structure comprises 393 residues: MKQLKPNSKYLLFGQALSFMGDYCVLPALLILSTYYHDYWVTSGVIAVRSIPMVFQPFLGVLVDRLDRVKIMLWTDVIRGVIFLGLTFLPKGEYPLLFLALLFVSYGSGVFFNPARLAVMSSLEADIKNINTLFAKATTISIIVGAAAGGLFLLGGSVELAVAFNGVTYLVSAFFISRIKLQYVPIQSENVREAFQSFKEGLKEIKTNAFVLNAMFTMITMALLWGVVYSYFPIVSRFLGDGEIGNFILTFCIGFGGFIGAALVSKWGFNNNKGLMYFTVLSIVSLALFLFTPIFAVSVIAAILFFIAMEYGEVLAKVKVQENAANQIQGRIFSVAEASIGLCIAVGSMLINIVDAAVIMAFIVLLVSGLFLHTKLVNKSFSERNNESEQIHL.

10 helical membrane passes run 11–31 (LLFG…ALLI), 43–63 (SGVI…GVLV), 69–89 (VKIM…LTFL), 92–112 (GEYP…GVFF), 133–155 (LFAK…FLLG), 160–177 (LAVA…FFIS), 215–235 (MFTM…FPIV), 244–264 (IGNF…AALV), 287–307 (ALFL…LFFI), and 353–373 (IVDA…LFLH).

Belongs to the major facilitator superfamily.

Its subcellular location is the cell membrane. Its function is as follows. Part of the bacilysin biosynthesis operon. May be involved in self-resistance to bacilysin by permitting efflux of this antibiotic. This is Putative bacilysin exporter BacE (bacE) from Bacillus subtilis.